Consider the following 512-residue polypeptide: MSIKTEEISSLIKKQLANYQDQISVEETGTVTYVGDGVARADGLENAMAGELLEFENGVYGMAQNLESNDVGIVILGDDTAIREGDTVKRTGRIMEVPVGDALLGRVVDPLGRSIDGLGDIKTDKTRPIERKAPGVMERKSVSQPLQTGIKVIDALVPIGRGQRELIIGDRKTGKTSIAIDTIINQKDQDMICIYVAIGQKESTVRSQVETLRKFGALDYTIVVSASASNPAPLLYIAPYAGAAMGEEFMFGGRDVLIIYDDLSKQADAYRELSLILRRPPGREAYPGDIFYTHSRLLERAARLSDDLGGGSMTALPVIQTQAGDVSAYIPTNVISITDGQIFLDADSFYAGQRPAIDAGTSVSRVGGDAQIKAMKKVSGTLRLDIASYNELAAFAQFGSDLDAATKARLDRGERTMEVLKQGLHAPQPVEQQVVTLYALAHNYLDDVPVDDVLRFESELATFMRSNHQDLYDSIKQSGQLPDGDGLDKALDAFKAGFQTSDQKQDASVAQN.

169–176 provides a ligand contact to ATP; it reads GDRKTGKT.

The protein belongs to the ATPase alpha/beta chains family. In terms of assembly, F-type ATPases have 2 components, CF(1) - the catalytic core - and CF(0) - the membrane proton channel. CF(1) has five subunits: alpha(3), beta(3), gamma(1), delta(1), epsilon(1). CF(0) has three main subunits: a(1), b(2) and c(9-12). The alpha and beta chains form an alternating ring which encloses part of the gamma chain. CF(1) is attached to CF(0) by a central stalk formed by the gamma and epsilon chains, while a peripheral stalk is formed by the delta and b chains.

It localises to the cell membrane. The enzyme catalyses ATP + H2O + 4 H(+)(in) = ADP + phosphate + 5 H(+)(out). Produces ATP from ADP in the presence of a proton gradient across the membrane. The alpha chain is a regulatory subunit. This is ATP synthase subunit alpha from Limosilactobacillus fermentum (strain NBRC 3956 / LMG 18251) (Lactobacillus fermentum).